The following is a 327-amino-acid chain: Transaldolase (327 aa).

The Schiff-base intermediate with substrate role is filled by Lys-132.

It belongs to the transaldolase family. Type 1 subfamily. In terms of assembly, homodimer.

Its subcellular location is the cytoplasm. It carries out the reaction D-sedoheptulose 7-phosphate + D-glyceraldehyde 3-phosphate = D-erythrose 4-phosphate + beta-D-fructose 6-phosphate. The protein operates within carbohydrate degradation; pentose phosphate pathway; D-glyceraldehyde 3-phosphate and beta-D-fructose 6-phosphate from D-ribose 5-phosphate and D-xylulose 5-phosphate (non-oxidative stage): step 2/3. Functionally, transaldolase is important for the balance of metabolites in the pentose-phosphate pathway. This chain is Transaldolase, found in Chlamydia caviae (strain ATCC VR-813 / DSM 19441 / 03DC25 / GPIC) (Chlamydophila caviae).